Reading from the N-terminus, the 328-residue chain is Malate dehydrogenase (328 aa).

11–17 (GAAGQIG) contacts NAD(+). Substrate contacts are provided by Arg-94 and Arg-100. Residues Asn-107, Gln-114, and 131 to 133 (VGN) contribute to the NAD(+) site. Substrate-binding residues include Asn-133 and Arg-164. Catalysis depends on His-189, which acts as the Proton acceptor.

Belongs to the LDH/MDH superfamily. MDH type 2 family.

It catalyses the reaction (S)-malate + NAD(+) = oxaloacetate + NADH + H(+). Functionally, catalyzes the reversible oxidation of malate to oxaloacetate. This Xanthomonas axonopodis pv. citri (strain 306) protein is Malate dehydrogenase.